The primary structure comprises 144 residues: Large ribosomal subunit protein uL15 (144 aa).

Residues 1–58 are disordered; the sequence is MKLNTLSPAAGAKHAAKRVGRGIGSGLGKTAGRGHKGQKSRSGGSIRPGFEGGQMPLK. Residues 21–31 are compositionally biased toward gly residues; the sequence is RGIGSGLGKTA.

It belongs to the universal ribosomal protein uL15 family. Part of the 50S ribosomal subunit.

In terms of biological role, binds to the 23S rRNA. This Psychromonas ingrahamii (strain DSM 17664 / CCUG 51855 / 37) protein is Large ribosomal subunit protein uL15.